A 183-amino-acid polypeptide reads, in one-letter code: Ribosome-recycling factor (183 aa).

Belongs to the RRF family.

It localises to the cytoplasm. Functionally, responsible for the release of ribosomes from messenger RNA at the termination of protein biosynthesis. May increase the efficiency of translation by recycling ribosomes from one round of translation to another. This chain is Ribosome-recycling factor, found in Christiangramia forsetii (strain DSM 17595 / CGMCC 1.15422 / KT0803) (Gramella forsetii).